Reading from the N-terminus, the 414-residue chain is Histidine--tRNA ligase (414 aa).

It belongs to the class-II aminoacyl-tRNA synthetase family. Homodimer.

The protein localises to the cytoplasm. It catalyses the reaction tRNA(His) + L-histidine + ATP = L-histidyl-tRNA(His) + AMP + diphosphate + H(+). The polypeptide is Histidine--tRNA ligase (Solibacter usitatus (strain Ellin6076)).